Consider the following 1055-residue polypeptide: Pre-mRNA-splicing factor ATP-dependent RNA helicase-like protein cdc28 (1055 aa).

The span at 67–78 (PREGSRPKENYN) shows a compositional bias: basic and acidic residues. The interval 67–184 (PREGSRPKEN…TERLNDLRER (118 aa)) is disordered. Residues 112–121 (PLKKKSRSKT) show a composition bias toward basic residues. Residues 122–132 (PKREIARRQRD) show a composition bias toward basic and acidic residues. Residues 133–145 (EDEWESDEYEEVV) show a composition bias toward acidic residues. A compositionally biased stretch (basic and acidic residues) spans 163 to 184 (QNHDYEKSSDPETERLNDLRER). The Helicase ATP-binding domain maps to 428 to 592 (LKAINEYQVL…FDEAPVFYVP (165 aa)). Residue 441–448 (AETGSGKT) participates in ATP binding. A DEAH box motif is present at residues 539–542 (DEAH). Residues 617–790 (TILQIHTTQP…NIVLLLKSLG (174 aa)) enclose the Helicase C-terminal domain.

This sequence belongs to the DEAD box helicase family. DEAH subfamily. DDX16/PRP8 sub-subfamily.

The protein resides in the nucleus. It carries out the reaction ATP + H2O = ADP + phosphate + H(+). In terms of biological role, involved in pre-mRNA splicing. Is required together with ATP and at least one other factor, for the first cleavage-ligation reaction. Functions as a molecular motor in the activation of the precatalytic spliceosome for the first transesterification reaction of pre-mRNA splicing by hydrolyzing ATP to cause the activation of the spliceosome without the occurrence of splicing. The protein is Pre-mRNA-splicing factor ATP-dependent RNA helicase-like protein cdc28 (cdc28) of Schizosaccharomyces pombe (strain 972 / ATCC 24843) (Fission yeast).